The chain runs to 91 residues: uncharacterized protein (91 aa).

Belongs to the FrmR/RcnR family.

The protein resides in the cytoplasm. This is an uncharacterized protein from Serratia marcescens.